Consider the following 70-residue polypeptide: Conotoxin AbVIC (70 aa).

The signal sequence occupies residues 1–17 (VLIIAVLFLTACQLTTA). Positions 18–41 (ETSSRGKQKHRALRSTDKNSKLTR) are excised as a propeptide. The interval 19–41 (TSSRGKQKHRALRSTDKNSKLTR) is disordered. 3 disulfides stabilise this stretch: cysteine 43/cysteine 57, cysteine 50/cysteine 61, and cysteine 56/cysteine 68.

The protein belongs to the conotoxin O1 superfamily. As to expression, expressed by the venom duct.

The protein resides in the secreted. The sequence is that of Conotoxin AbVIC from Conus abbreviatus (Abbreviated cone).